A 109-amino-acid polypeptide reads, in one-letter code: Nucleoid-associated protein Sama_1311 (109 aa).

Belongs to the YbaB/EbfC family. Homodimer.

It localises to the cytoplasm. The protein localises to the nucleoid. Binds to DNA and alters its conformation. May be involved in regulation of gene expression, nucleoid organization and DNA protection. In Shewanella amazonensis (strain ATCC BAA-1098 / SB2B), this protein is Nucleoid-associated protein Sama_1311.